Here is a 99-residue protein sequence, read N- to C-terminus: Endothelin receptor type B (99 aa).

Residues 1–8 lie on the Extracellular side of the membrane; it reads PFGAEMCK. A disulfide bridge links Cys-7 with Cys-88. The chain crosses the membrane as a helical span at residues 9 to 30; that stretch reads LVPFIQKASVGITVLSLCALSI. Residues 31–51 are Cytoplasmic-facing; sequence DRYRAVASWSRIKGIGIPKWT. Residues 52–76 traverse the membrane as a helical segment; it reads AVEIVLIWVVSVVLAVPEAIGFDMI. Over 77-99 the chain is Extracellular; that stretch reads TMDYKGSYLRICLLHPVQKTAFM.

This sequence belongs to the G-protein coupled receptor 1 family. Endothelin receptor subfamily. EDNRB sub-subfamily.

It is found in the cell membrane. Non-specific receptor for endothelin 1, 2, and 3. Mediates its action by association with G proteins that activate a phosphatidylinositol-calcium second messenger system. In Macaca fascicularis (Crab-eating macaque), this protein is Endothelin receptor type B (EDNRB).